The sequence spans 301 residues: Bifunctional protein FolD (301 aa).

Residues 166 to 168 (GKS), Ser191, and Ile232 each bind NADP(+).

It belongs to the tetrahydrofolate dehydrogenase/cyclohydrolase family. In terms of assembly, homodimer.

The enzyme catalyses (6R)-5,10-methylene-5,6,7,8-tetrahydrofolate + NADP(+) = (6R)-5,10-methenyltetrahydrofolate + NADPH. The catalysed reaction is (6R)-5,10-methenyltetrahydrofolate + H2O = (6R)-10-formyltetrahydrofolate + H(+). It functions in the pathway one-carbon metabolism; tetrahydrofolate interconversion. In terms of biological role, catalyzes the oxidation of 5,10-methylenetetrahydrofolate to 5,10-methenyltetrahydrofolate and then the hydrolysis of 5,10-methenyltetrahydrofolate to 10-formyltetrahydrofolate. The chain is Bifunctional protein FolD from Orientia tsutsugamushi (strain Boryong) (Rickettsia tsutsugamushi).